A 267-amino-acid polypeptide reads, in one-letter code: Small ribosomal subunit protein uS3 (267 aa).

The 69-residue stretch at 43 to 111 (IRKEMSKDLE…QVQLNIFEVK (69 aa)) folds into the KH type-2 domain. The segment at 216–267 (FEEQQAQQNNRPGRRGGDRRPRRGNRSAAPQAAEAPKAEAPAEAAPAAETKE) is disordered. Positions 241-267 (RSAAPQAAEAPKAEAPAEAAPAAETKE) are enriched in low complexity.

Belongs to the universal ribosomal protein uS3 family. Part of the 30S ribosomal subunit. Forms a tight complex with proteins S10 and S14.

Binds the lower part of the 30S subunit head. Binds mRNA in the 70S ribosome, positioning it for translation. This chain is Small ribosomal subunit protein uS3, found in Bifidobacterium longum subsp. infantis (strain ATCC 15697 / DSM 20088 / JCM 1222 / NCTC 11817 / S12).